Here is a 278-residue protein sequence, read N- to C-terminus: Energy-coupling factor transporter ATP-binding protein EcfA (278 aa).

In terms of domain architecture, ABC transporter spans 4–239; sequence LETRDLKYSY…SETVRSANLR (236 aa). Position 37–44 (37–44) interacts with ATP; the sequence is GPNGAGKS.

The protein belongs to the ABC transporter superfamily. Energy-coupling factor EcfA family. As to quaternary structure, forms a stable energy-coupling factor (ECF) transporter complex composed of 2 membrane-embedded substrate-binding proteins (S component), 2 ATP-binding proteins (A component) and 2 transmembrane proteins (T component).

The protein resides in the cell membrane. ATP-binding (A) component of a common energy-coupling factor (ECF) ABC-transporter complex. Unlike classic ABC transporters this ECF transporter provides the energy necessary to transport a number of different substrates. In Methanococcus maripaludis (strain DSM 14266 / JCM 13030 / NBRC 101832 / S2 / LL), this protein is Energy-coupling factor transporter ATP-binding protein EcfA.